A 363-amino-acid chain; its full sequence is Serpentine receptor class beta-17 (363 aa).

7 consecutive transmembrane segments (helical) span residues 46–66, 75–95, 120–140, 169–189, 214–234, 273–293, and 304–324; these read AFLL…GSII, LLAF…SCFL, VILA…SMLC, IGFV…LYMY, YIFI…IGLY, CAQL…RIFL, and VTEF…ICIV.

Belongs to the nematode receptor-like protein srb family.

The protein resides in the membrane. This Caenorhabditis elegans protein is Serpentine receptor class beta-17 (srb-17).